Reading from the N-terminus, the 50-residue chain is Ampulexin 2 (50 aa).

A signal peptide spans 1–26 (MKAIMVLFYVMTLTIIGSFSMVSGSP).

Dimer; disulfide-linked. In terms of tissue distribution, expressed in venom sac and, to a lesser extent, in venom gland. Not expressed in brain.

Its subcellular location is the secreted. Functionally, amphipathic peptide which probably adopts an alpha-helical structure. Has no antimicrobial activity against E.coli DH5alpha or B.thuringiensis. Is not cytotoxic in vitro. The protein is Ampulexin 2 of Ampulex compressa (Emerald cockroach wasp).